The chain runs to 241 residues: tRNA pseudouridine synthase A (241 aa).

Catalysis depends on Asp52, which acts as the Nucleophile. Tyr110 lines the substrate pocket.

It belongs to the tRNA pseudouridine synthase TruA family. In terms of assembly, homodimer.

It carries out the reaction uridine(38/39/40) in tRNA = pseudouridine(38/39/40) in tRNA. Its function is as follows. Formation of pseudouridine at positions 38, 39 and 40 in the anticodon stem and loop of transfer RNAs. The protein is tRNA pseudouridine synthase A of Aquifex aeolicus (strain VF5).